We begin with the raw amino-acid sequence, 347 residues long: Ribosomal RNA large subunit methyltransferase M (347 aa).

Residues Ser-184, 217–220 (APGG), Asp-236, Asp-256, and Asp-272 contribute to the S-adenosyl-L-methionine site. Lys-301 (proton acceptor) is an active-site residue.

The protein belongs to the class I-like SAM-binding methyltransferase superfamily. RNA methyltransferase RlmE family. RlmM subfamily. In terms of assembly, monomer.

Its subcellular location is the cytoplasm. It catalyses the reaction cytidine(2498) in 23S rRNA + S-adenosyl-L-methionine = 2'-O-methylcytidine(2498) in 23S rRNA + S-adenosyl-L-homocysteine + H(+). In terms of biological role, catalyzes the 2'-O-methylation at nucleotide C2498 in 23S rRNA. The protein is Ribosomal RNA large subunit methyltransferase M of Xanthomonas oryzae pv. oryzae (strain MAFF 311018).